The chain runs to 747 residues: Putative ankyrin repeat protein FPV222 (747 aa).

ANK repeat units lie at residues 38–67, 103–132, 136–165, 169–198, 202–231, 234–263, 294–323, 328–357, 361–393, 397–426, 430–460, 464–493, 495–524, and 529–559; these read DNCT…DPNI, NYRN…LVNM, KNIT…NTNA, YGET…NVNV, DSIT…DTNA, LERF…NTNV, PCTV…NPDI, TSTY…YTDV, QQNT…SFNL, KGRT…DTNI, MSFT…DPNL, KEVS…DIKP, NECY…ELEV, and DHYV…DLNK.

This chain is Putative ankyrin repeat protein FPV222, found in Vertebrata (FPV).